The primary structure comprises 223 residues: Ethylene-inducing xylanase (223 aa).

A signal peptide spans 1-19 (MVSFTTLLAGFVAVTGVLS). Residues 34-223 (QTIGPGTGFN…SSGNANINVS (190 aa)) form the GH11 domain. Asparagine 94 is a glycosylation site (N-linked (GlcNAc...) asparagine). Glutamate 119 serves as the catalytic Nucleophile. Glutamate 210 acts as the Proton donor in catalysis.

This sequence belongs to the glycosyl hydrolase 11 (cellulase G) family. In terms of assembly, interactc with tomato LeEix2 receptor to trigger its internalization.

The protein localises to the secreted. The enzyme catalyses Endohydrolysis of (1-&gt;4)-beta-D-xylosidic linkages in xylans.. It participates in glycan degradation; xylan degradation. Functionally, endo-1,4-beta-xylanase involved in the hydrolysis of xylan, a major structural heterogeneous polysaccharide found in plant biomass representing the second most abundant polysaccharide in the biosphere, after cellulose. Acts as an elicitor of plant defense responses in hosts such as tobacco (Nicotiana tabacum) or tomato (Solanum lycopersicum). Induces the production of ethylene and leads alterations in membrane function with rapid efflux of potassium, uptake of calcium, alkalization of the medium, increased leakage of cellular components and necrosis in plant hosts. EIX is translocated through the xylem of the host plant to the leaf mesophyll, leading to host response to pathogen-derived extracellular proteins in tissues distant from the invading pathogen. Greatly enhances the expression of two calcineurin B-like proteins-interacting protein kinases (CIPKs) family members, OsCIPK14 and OsCIPK15, in rice cultured cells. In tomato, triggers the defense response via binding to and subsequent internalization of the LeEix2 receptor. The polypeptide is Ethylene-inducing xylanase (Hypocrea rufa (Trichoderma viride)).